Here is a 274-residue protein sequence, read N- to C-terminus: Short-chain dehydrogenase/reductase bsc3 (274 aa).

Ile14, Tyr170, Lys174, Ile203, and Thr205 together coordinate NADP(+). Tyr170 acts as the Proton donor in catalysis. Lys174 serves as the catalytic Lowers pKa of active site Tyr.

Belongs to the short-chain dehydrogenases/reductases (SDR) family.

Its pathway is mycotoxin biosynthesis. Functionally, short-chain dehydrogenase/reductase; part of the gene cluster that mediates the biosynthesis of the diterpene glucoside brassicicene C. In the first step of the brassicicene C biosynthesis, the bifunctional diterpene synthase bsc8 that possesses both prenyl transferase and terpene cyclase activity, converts isopentenyl diphosphate and dimethylallyl diphosphate into geranylgeranyl diphosphate (GGDP) that is further converted into fusicocca-2,10(14)-diene, the first precursor for brassicicene C. Fusicocca-2,10(14)-diene is then substrate of cytochrome P450 monooxygenase bsc1 for hydroxylation at the C-8 position. Oxidation at C-16 position to aldehyde is then catalyzed by the cytochrome P450 monooyxygenase bsc7, yielding fusicocca-2,10(14)-diene-8-beta,16-diol. Follows the isomerization of the double bond and reduction of aldehyde to alcohol catalyzed by the short-chain dehydrogenase/reductase bsc3 to yield the diol compound fusicocca-1,10(14)-diene-8 beta,16-diol. The next step is the oxidation at the C-3 position of fusicocca-2,10(14)-diene-8-beta,16-diol catalyzed by the alpha-ketoglutarate dependent dioxygenase bsc9, to produce a triol compound. Methylation of the hydroxy group at position 16 is performed by the methyltransferase bsc6. 16-O-methylation is followed by oxidation at the C-13 position to ketone and an alkyl shift of the methyl group leads to brassicicene C. Although the probable acetyltransferase bsc4 is included in the gene cluster, no acetylation reactions are necessary for brassicicene C biosynthesis. However, the fact that brassicicene E, which is a structurally related compound having an acetoxy group at position 12, was previously isolated from another strain of A.brassicicola suggests that the ATCC 96836 strain might also produce a small amount of brassicicene E. The polypeptide is Short-chain dehydrogenase/reductase bsc3 (Alternaria brassicicola (Dark leaf spot agent)).